The primary structure comprises 444 residues: Glutamyl-tRNA reductase (444 aa).

Substrate contacts are provided by residues 49–52 (TCNR), S109, 114–116 (ETQ), and Q120. C50 (nucleophile) is an active-site residue. 189 to 194 (GAGKMS) contacts NADP(+). The tract at residues 425-444 (KPKKQPAPAGIKEPVLAKKG) is disordered.

The protein belongs to the glutamyl-tRNA reductase family. As to quaternary structure, homodimer.

It catalyses the reaction (S)-4-amino-5-oxopentanoate + tRNA(Glu) + NADP(+) = L-glutamyl-tRNA(Glu) + NADPH + H(+). It functions in the pathway porphyrin-containing compound metabolism; protoporphyrin-IX biosynthesis; 5-aminolevulinate from L-glutamyl-tRNA(Glu): step 1/2. Catalyzes the NADPH-dependent reduction of glutamyl-tRNA(Glu) to glutamate 1-semialdehyde (GSA). This Pelotomaculum thermopropionicum (strain DSM 13744 / JCM 10971 / SI) protein is Glutamyl-tRNA reductase.